We begin with the raw amino-acid sequence, 210 residues long: Redox-sensing transcriptional repressor Rex (210 aa).

Residues 16 to 55 (VYSRHLTDVDRKGIVTISSGDIAEGVGVSPAQVRKDLAYF) constitute a DNA-binding region (H-T-H motif). Position 90-95 (90-95 (GMGNLG)) interacts with NAD(+).

This sequence belongs to the transcriptional regulatory Rex family. Homodimer.

The protein resides in the cytoplasm. Functionally, modulates transcription in response to changes in cellular NADH/NAD(+) redox state. In Desulfitobacterium hafniense (strain DSM 10664 / DCB-2), this protein is Redox-sensing transcriptional repressor Rex.